Reading from the N-terminus, the 296-residue chain is Aldo-keto reductase MYCFIDRAFT_156381 (296 aa).

Residue Asp14 coordinates NADP(+). Tyr19 functions as the Proton donor in the catalytic mechanism. A substrate-binding site is contributed by His83. Residues 113–114, Gln139, 168–178, and Arg191 each bind NADP(+); these read CN and SPLAGGMLTDR. Tyr201 provides a ligand contact to substrate. 255–263 is an NADP(+) binding site; that stretch reads SSAEQLESN.

The protein belongs to the aldo/keto reductase family. Aldo/keto reductase 2 subfamily.

It participates in secondary metabolite biosynthesis. Functionally, aldo-keto reductase; part of the gene cluster that mediates the biosynthesis of an emodin derivative that may be involved in black Sigatoka disease of banana. The pathway begins with the synthesis of atrochrysone thioester by the polyketide synthase PKS8-1. The atrochrysone carboxyl ACP thioesterase MYCFIDRAFT_190111 then breaks the thioester bond and releases the atrochrysone carboxylic acid from PKS8-1. The decarboxylase MYCFIDRAFT_34057 then catalyzes the concerted decarboxylation-elimination required to convert atochrysone carboxylic acid into emodin anthrone, which is further oxidized to emodin by the anthrone oxygenase MYCFIDRAFT_34418. The functions of the other tailoring enzymes as well as the final product of the cluster have still to be identified. In Pseudocercospora fijiensis (strain CIRAD86) (Black leaf streak disease fungus), this protein is Aldo-keto reductase MYCFIDRAFT_156381.